We begin with the raw amino-acid sequence, 213 residues long: MSRNSYIQQSSDIQAAGGLVPMVIEQSARGERAYDIYSRLLKERVIFLVGPVEDYMANLVVAQMLFLEAENPDKDIHLYINSPGGSVTAGMSIYDTMQFIKPDVSTICIGQACSMGAFLLTAGAKGKRHCLPNSRVMIHQPLGGFQGQATDIQIHAQEILSIKARLNELLAYHTGQDLETIQRDTERDNFMSASRAAEYGLIDSVYDKRQLAS.

The active-site Nucleophile is serine 114. Histidine 139 is an active-site residue.

The protein belongs to the peptidase S14 family. In terms of assembly, fourteen ClpP subunits assemble into 2 heptameric rings which stack back to back to give a disk-like structure with a central cavity, resembling the structure of eukaryotic proteasomes.

It is found in the cytoplasm. It catalyses the reaction Hydrolysis of proteins to small peptides in the presence of ATP and magnesium. alpha-casein is the usual test substrate. In the absence of ATP, only oligopeptides shorter than five residues are hydrolyzed (such as succinyl-Leu-Tyr-|-NHMec, and Leu-Tyr-Leu-|-Tyr-Trp, in which cleavage of the -Tyr-|-Leu- and -Tyr-|-Trp bonds also occurs).. In terms of biological role, cleaves peptides in various proteins in a process that requires ATP hydrolysis. Has a chymotrypsin-like activity. Plays a major role in the degradation of misfolded proteins. This is ATP-dependent Clp protease proteolytic subunit from Pseudomonas putida (strain GB-1).